A 178-amino-acid polypeptide reads, in one-letter code: Protein GrpE (178 aa).

A disordered region spans residues 1-26 (MQDQDKYAEQAASMEEPASADAPAIV).

The protein belongs to the GrpE family. Homodimer.

It localises to the cytoplasm. In terms of biological role, participates actively in the response to hyperosmotic and heat shock by preventing the aggregation of stress-denatured proteins, in association with DnaK and GrpE. It is the nucleotide exchange factor for DnaK and may function as a thermosensor. Unfolded proteins bind initially to DnaJ; upon interaction with the DnaJ-bound protein, DnaK hydrolyzes its bound ATP, resulting in the formation of a stable complex. GrpE releases ADP from DnaK; ATP binding to DnaK triggers the release of the substrate protein, thus completing the reaction cycle. Several rounds of ATP-dependent interactions between DnaJ, DnaK and GrpE are required for fully efficient folding. The polypeptide is Protein GrpE (Herminiimonas arsenicoxydans).